Consider the following 370-residue polypeptide: Putative agmatine deiminase (370 aa).

Residue cysteine 361 is the Amidino-cysteine intermediate of the active site.

This sequence belongs to the agmatine deiminase family.

The enzyme catalyses agmatine + H2O = N-carbamoylputrescine + NH4(+). This Shewanella baltica (strain OS195) protein is Putative agmatine deiminase.